The chain runs to 885 residues: Alanine--tRNA ligase (885 aa).

Zn(2+)-binding residues include His-574, His-578, Cys-676, and His-680.

This sequence belongs to the class-II aminoacyl-tRNA synthetase family. It depends on Zn(2+) as a cofactor.

The protein localises to the cytoplasm. The catalysed reaction is tRNA(Ala) + L-alanine + ATP = L-alanyl-tRNA(Ala) + AMP + diphosphate. Functionally, catalyzes the attachment of alanine to tRNA(Ala) in a two-step reaction: alanine is first activated by ATP to form Ala-AMP and then transferred to the acceptor end of tRNA(Ala). Also edits incorrectly charged Ser-tRNA(Ala) and Gly-tRNA(Ala) via its editing domain. The sequence is that of Alanine--tRNA ligase from Syntrophobacter fumaroxidans (strain DSM 10017 / MPOB).